The primary structure comprises 432 residues: Gamma-glutamyl phosphate reductase (432 aa).

Belongs to the gamma-glutamyl phosphate reductase family.

The protein resides in the cytoplasm. It catalyses the reaction L-glutamate 5-semialdehyde + phosphate + NADP(+) = L-glutamyl 5-phosphate + NADPH + H(+). It functions in the pathway amino-acid biosynthesis; L-proline biosynthesis; L-glutamate 5-semialdehyde from L-glutamate: step 2/2. In terms of biological role, catalyzes the NADPH-dependent reduction of L-glutamate 5-phosphate into L-glutamate 5-semialdehyde and phosphate. The product spontaneously undergoes cyclization to form 1-pyrroline-5-carboxylate. This Clavibacter michiganensis subsp. michiganensis (strain NCPPB 382) protein is Gamma-glutamyl phosphate reductase.